The following is an 85-amino-acid chain: N.vectensis toxin 1 5 (85 aa).

The signal sequence occupies residues 1–20; the sequence is MASFKIVIVCLALLVAVACA. Positions 21–36 are excised as a propeptide; sequence RRRDMMSDDELDFHLS. Disulfide bonds link C42–C82, C44–C72, and C65–C83.

The protein belongs to the sea anemone sodium channel inhibitory toxin family. Type II subfamily. In terms of tissue distribution, expressed in ectodermal glands and in clumps outside of the extodermal layer. Is not expressed in nematocytes. In adult female tissues, shows similar expression levels in mesenteries (gametes-producing tissue), tentacles, pharynx and physa.

It localises to the secreted. Its function is as follows. Binds to site 3 of voltage-gated sodium channels and inhibits the inactivation process. Is highly active on DmNav1/TipE (drosophila) and is only extremely weakly active on rat Nav1.4-beta-1/SCN4A-SCN1B, and on human Nav1.5-beta-1/SCN5A-beta-1. This reveals high specificity for arthropod over mammalian channels. In vivo, when released into the medium, this recombinant toxin induces impaired swimming, paralysis and death of the crustacean A.nauplii within several hours. Also causes paralysis of cherry shrimps immediately after injection at very low doses. Its effect on zebrafish (D.rerio) larvae is also rapid, since it induces tail twitching accompanied by impaired swimming after 20 minutes and complete paralysis within 45 minutes. It has also been observed to cause death of zebrafish larvae within 1 hour. This Nematostella vectensis (Starlet sea anemone) protein is N.vectensis toxin 1 5.